A 158-amino-acid chain; its full sequence is Photosystem I assembly protein Ycf3 (158 aa).

TPR repeat units lie at residues 35–68 (AFSYYREGMAAQAEGEYAQALESYYHALEFEEDV), 72–105 (SYIIYNIGLIYASNGEDEQALEYYHQALELNPRL), and 113–146 (AVIYHKQGMTYQDEQLLQKAAAYWRKAIQLAPGQ).

Belongs to the Ycf3 family.

Its subcellular location is the plastid. It is found in the chloroplast thylakoid membrane. In terms of biological role, essential for the assembly of the photosystem I (PSI) complex. May act as a chaperone-like factor to guide the assembly of the PSI subunits. This is Photosystem I assembly protein Ycf3 from Cyanidioschyzon merolae (strain NIES-3377 / 10D) (Unicellular red alga).